We begin with the raw amino-acid sequence, 178 residues long: V-type proton ATPase subunit c''2 (178 aa).

At 1–24 the chain is on the lumenal side; it reads MSGVAIHASSWGAALVRISPYTFS. Residues 25-45 traverse the membrane as a helical segment; sequence AIGIAISIGVSVLGAAWGIYI. The Cytoplasmic portion of the chain corresponds to 46 to 64; sequence TGSSLIGAAIEAPRITSKN. A helical transmembrane segment spans residues 65-85; sequence LISVIFCEAVAIYGVIVAIIL. Topologically, residues 86-108 are lumenal; sequence QTKLESVPSSKMYDAESLRAGYA. Residues 109-129 traverse the membrane as a helical segment; the sequence is IFASGIIVGFANLVCGLCVGI. Residues 130–147 lie on the Cytoplasmic side of the membrane; that stretch reads IGSSCALSDAQNSTLFVK. A helical transmembrane segment spans residues 148–168; the sequence is ILVIEIFGSALGLFGVIVGII. Over 169–178 the chain is Lumenal; it reads MSAQATWPTK.

This sequence belongs to the V-ATPase proteolipid subunit family. In terms of assembly, V-ATPase is a heteromultimeric enzyme composed of a peripheral catalytic V1 complex (components A to H) attached to an integral membrane V0 proton pore complex (components: a, c, c'', d and e). The proteolipid components c and c'' are present as a hexameric ring that forms the proton-conducting pore. Interacts with APD2.

It localises to the endoplasmic reticulum membrane. Its subcellular location is the golgi apparatus membrane. Functionally, proton-conducting pore forming subunit of the membrane integral V0 complex of vacuolar ATPase. V-ATPase is responsible for acidifying a variety of intracellular compartments in eukaryotic cells. This is V-type proton ATPase subunit c''2 (VHA-c''2) from Arabidopsis thaliana (Mouse-ear cress).